A 103-amino-acid chain; its full sequence is Co-chaperonin GroES (103 aa).

It belongs to the GroES chaperonin family. Heptamer of 7 subunits arranged in a ring. Interacts with the chaperonin GroEL.

It is found in the cytoplasm. Its function is as follows. Together with the chaperonin GroEL, plays an essential role in assisting protein folding. The GroEL-GroES system forms a nano-cage that allows encapsulation of the non-native substrate proteins and provides a physical environment optimized to promote and accelerate protein folding. GroES binds to the apical surface of the GroEL ring, thereby capping the opening of the GroEL channel. In Prochlorococcus marinus (strain MIT 9313), this protein is Co-chaperonin GroES.